The following is a 459-amino-acid chain: Flavin-containing monooxygenase FMO GS-OX5 (459 aa).

17-22 (GAGAAG) contributes to the FAD binding site. Residue 212–217 (GNFASG) coordinates NADP(+).

The protein belongs to the FMO family.

The enzyme catalyses a (Z)-omega-(methylsulfanyl)-N-sulfo-alkylhydroximate S-glucoside + NADPH + O2 + H(+) = a (Z)-omega-(methylsulfinyl)-alkyl-glucosinolate + NADP(+) + H2O. Its function is as follows. Catalyzes the conversion of methylthioalkyl glucosinolates into methylsulfinylalkyl glucosinolates. Specific for 8-methylthiooctyl (8-MTO) glucosinolates. The protein is Flavin-containing monooxygenase FMO GS-OX5 (FMOGS-OX5) of Arabidopsis thaliana (Mouse-ear cress).